We begin with the raw amino-acid sequence, 131 residues long: Large ribosomal subunit protein bL17 (131 aa).

It belongs to the bacterial ribosomal protein bL17 family. Part of the 50S ribosomal subunit. Contacts protein L32.

The chain is Large ribosomal subunit protein bL17 from Bordetella parapertussis (strain 12822 / ATCC BAA-587 / NCTC 13253).